A 486-amino-acid polypeptide reads, in one-letter code: Coronin-1B (486 aa).

Ser2 bears the Phosphoserine; by PKC mark. WD repeat units lie at residues 80–120 (GHTG…LTSP), 130–170 (GHTK…ELYR), 174–213 (LHPDLIYNVSWNRNGSLFCSACKDKSVRIIDPRRGTLVAE), 217–260 (AHEG…EPMA), and 265–305 (DSSN…PYIH). The tract at residues 404-444 (LKVSRRNVLSDSRPTSAARPAAPAPAAPAPAAAASSSLSGA) is disordered. Residues 432–444 (APAAAASSSLSGA) show a composition bias toward low complexity. The stretch at 446 to 484 (EAGKLEEVMRELRALRALVKEQGERIGRLEEQLGRVENG) forms a coiled coil.

The protein belongs to the WD repeat coronin family. In terms of assembly, forms homooligomers, but does not form complexes with the other coronins. Interacts with Arp2/3 complex components, including ACTR2, ARPC1B and ARPC2. Binds actin. Phosphorylated in vivo by PKC in response to cholinergic stimulation. Phosphorylation on Ser-2 regulates the interaction with the Arp2/3 complex and cell motility in fibroblasts. Phosphorylation does not seem to affect subcellular location.

Its subcellular location is the cytoplasm. The protein resides in the cytoskeleton. The protein localises to the stress fiber. Regulates leading edge dynamics and cell motility in fibroblasts. May be involved in cytokinesis and signal transduction. The sequence is that of Coronin-1B (CORO1B) from Oryctolagus cuniculus (Rabbit).